The sequence spans 218 residues: Pyridoxine/pyridoxamine 5'-phosphate oxidase (218 aa).

Substrate contacts are provided by residues 12–15 (RMSY) and R70. FMN-binding positions include 65–70 (RTVLLR), 80–81 (YT), K87, and Q109. Residues Y127, R131, and S135 each coordinate substrate. FMN is bound by residues 145–146 (QS) and W191. 197-199 (RLH) serves as a coordination point for substrate. R201 contacts FMN.

It belongs to the pyridoxamine 5'-phosphate oxidase family. Homodimer. It depends on FMN as a cofactor.

The enzyme catalyses pyridoxamine 5'-phosphate + O2 + H2O = pyridoxal 5'-phosphate + H2O2 + NH4(+). It carries out the reaction pyridoxine 5'-phosphate + O2 = pyridoxal 5'-phosphate + H2O2. It participates in cofactor metabolism; pyridoxal 5'-phosphate salvage; pyridoxal 5'-phosphate from pyridoxamine 5'-phosphate: step 1/1. It functions in the pathway cofactor metabolism; pyridoxal 5'-phosphate salvage; pyridoxal 5'-phosphate from pyridoxine 5'-phosphate: step 1/1. Its function is as follows. Catalyzes the oxidation of either pyridoxine 5'-phosphate (PNP) or pyridoxamine 5'-phosphate (PMP) into pyridoxal 5'-phosphate (PLP). This is Pyridoxine/pyridoxamine 5'-phosphate oxidase from Acinetobacter baylyi (strain ATCC 33305 / BD413 / ADP1).